The following is a 183-amino-acid chain: ATP-dependent protease subunit HslV (183 aa).

Residue Thr-2 is part of the active site. Residues Gly-157, Cys-160, and Thr-163 each coordinate Na(+).

Belongs to the peptidase T1B family. HslV subfamily. A double ring-shaped homohexamer of HslV is capped on each side by a ring-shaped HslU homohexamer. The assembly of the HslU/HslV complex is dependent on binding of ATP.

The protein localises to the cytoplasm. The enzyme catalyses ATP-dependent cleavage of peptide bonds with broad specificity.. With respect to regulation, allosterically activated by HslU binding. Functionally, protease subunit of a proteasome-like degradation complex believed to be a general protein degrading machinery. In Vibrio campbellii (strain ATCC BAA-1116), this protein is ATP-dependent protease subunit HslV.